The primary structure comprises 111 residues: UPF0060 membrane protein Krad_3114 (111 aa).

4 helical membrane-spanning segments follow: residues I7 to G27, G33 to L53, V62 to D82, and R88 to P108.

This sequence belongs to the UPF0060 family.

It is found in the cell membrane. This Kineococcus radiotolerans (strain ATCC BAA-149 / DSM 14245 / SRS30216) protein is UPF0060 membrane protein Krad_3114.